The chain runs to 247 residues: tRNA pseudouridine synthase A 1 (247 aa).

Asp53 serves as the catalytic Nucleophile. Residue Tyr111 coordinates substrate.

This sequence belongs to the tRNA pseudouridine synthase TruA family. Homodimer.

The enzyme catalyses uridine(38/39/40) in tRNA = pseudouridine(38/39/40) in tRNA. Its function is as follows. Formation of pseudouridine at positions 38, 39 and 40 in the anticodon stem and loop of transfer RNAs. This Bacillus cereus (strain ATCC 14579 / DSM 31 / CCUG 7414 / JCM 2152 / NBRC 15305 / NCIMB 9373 / NCTC 2599 / NRRL B-3711) protein is tRNA pseudouridine synthase A 1.